Here is a 535-residue protein sequence, read N- to C-terminus: CTP synthase (535 aa).

Residues 1–270 (MSKNTKYVFV…DRLVCEKLGL (270 aa)) are amidoligase domain. A CTP-binding site is contributed by Ser16. Ser16 lines the UTP pocket. Residue 17-22 (SLGKGI) participates in ATP binding. Tyr57 lines the L-glutamine pocket. Asp74 contributes to the ATP binding site. Asp74 and Glu144 together coordinate Mg(2+). CTP contacts are provided by residues 151–153 (DIE), 191–196 (KTKPTQ), and Lys227. UTP contacts are provided by residues 191-196 (KTKPTQ) and Lys227. A Glutamine amidotransferase type-1 domain is found at 295–535 (KIALVGKYVE…GFVGAALNNK (241 aa)). Position 357 (Gly357) interacts with L-glutamine. Cys384 (nucleophile; for glutamine hydrolysis) is an active-site residue. Residues 385–388 (LGMQ), Glu408, and Arg465 contribute to the L-glutamine site. Active-site residues include His510 and Glu512.

The protein belongs to the CTP synthase family. In terms of assembly, homotetramer.

It carries out the reaction UTP + L-glutamine + ATP + H2O = CTP + L-glutamate + ADP + phosphate + 2 H(+). The catalysed reaction is L-glutamine + H2O = L-glutamate + NH4(+). It catalyses the reaction UTP + NH4(+) + ATP = CTP + ADP + phosphate + 2 H(+). The protein operates within pyrimidine metabolism; CTP biosynthesis via de novo pathway; CTP from UDP: step 2/2. With respect to regulation, allosterically activated by GTP, when glutamine is the substrate; GTP has no effect on the reaction when ammonia is the substrate. The allosteric effector GTP functions by stabilizing the protein conformation that binds the tetrahedral intermediate(s) formed during glutamine hydrolysis. Inhibited by the product CTP, via allosteric rather than competitive inhibition. In terms of biological role, catalyzes the ATP-dependent amination of UTP to CTP with either L-glutamine or ammonia as the source of nitrogen. Regulates intracellular CTP levels through interactions with the four ribonucleotide triphosphates. This Clostridium perfringens (strain ATCC 13124 / DSM 756 / JCM 1290 / NCIMB 6125 / NCTC 8237 / Type A) protein is CTP synthase.